The sequence spans 627 residues: Membrane protein insertase YidC (627 aa).

The chain crosses the membrane as a helical span at residues Leu8–Pro28. The segment covering Lys33–Gly57 has biased composition (polar residues). The tract at residues Lys33 to Val68 is disordered. Residues Lys58–Val68 are compositionally biased toward basic and acidic residues. 4 consecutive transmembrane segments (helical) span residues Phe417 to Phe437, Val488 to Phe508, Ala536 to Gly556, and Met575 to Val595.

The protein belongs to the OXA1/ALB3/YidC family. Type 1 subfamily. As to quaternary structure, interacts with the Sec translocase complex via SecD. Specifically interacts with transmembrane segments of nascent integral membrane proteins during membrane integration.

The protein resides in the cell inner membrane. Its function is as follows. Required for the insertion and/or proper folding and/or complex formation of integral membrane proteins into the membrane. Involved in integration of membrane proteins that insert both dependently and independently of the Sec translocase complex, as well as at least some lipoproteins. Aids folding of multispanning membrane proteins. The polypeptide is Membrane protein insertase YidC (Leptospira interrogans serogroup Icterohaemorrhagiae serovar copenhageni (strain Fiocruz L1-130)).